Consider the following 230-residue polypeptide: Ureidoacrylate amidohydrolase RutB (230 aa).

Aspartate 24 serves as the catalytic Proton acceptor. Lysine 133 is a catalytic residue. Cysteine 166 (nucleophile) is an active-site residue.

The protein belongs to the isochorismatase family. RutB subfamily.

The catalysed reaction is (Z)-3-ureidoacrylate + H2O + H(+) = (Z)-3-aminoacrylate + NH4(+) + CO2. The enzyme catalyses (Z)-3-ureidoacrylate + H2O = (Z)-3-aminoacrylate + carbamate + H(+). It catalyses the reaction (Z)-2-methylureidoacrylate + H2O + H(+) = (Z)-2-methylaminoacrylate + NH4(+) + CO2. Its function is as follows. Hydrolyzes ureidoacrylate to form aminoacrylate and carbamate. The carbamate hydrolyzes spontaneously, thereby releasing one of the nitrogen atoms of the pyrimidine ring as ammonia and one of its carbon atoms as CO2. The sequence is that of Ureidoacrylate amidohydrolase RutB from Escherichia coli O7:K1 (strain IAI39 / ExPEC).